Here is a 421-residue protein sequence, read N- to C-terminus: Gamma-glutamyl phosphate reductase (421 aa).

It belongs to the gamma-glutamyl phosphate reductase family.

The protein localises to the cytoplasm. The catalysed reaction is L-glutamate 5-semialdehyde + phosphate + NADP(+) = L-glutamyl 5-phosphate + NADPH + H(+). It participates in amino-acid biosynthesis; L-proline biosynthesis; L-glutamate 5-semialdehyde from L-glutamate: step 2/2. Catalyzes the NADPH-dependent reduction of L-glutamate 5-phosphate into L-glutamate 5-semialdehyde and phosphate. The product spontaneously undergoes cyclization to form 1-pyrroline-5-carboxylate. In Shewanella pealeana (strain ATCC 700345 / ANG-SQ1), this protein is Gamma-glutamyl phosphate reductase.